We begin with the raw amino-acid sequence, 78 residues long: MKTSAFFIAVLLILSCSSSMIMGVSYHENRCHDWVDCAIWCKQWVPQPKCINRVCDCKPKSLPTNDEIPKSASSSSKN.

An N-terminal signal peptide occupies residues 1-19 (MKTSAFFIAVLLILSCSSS). Cystine bridges form between cysteine 31–cysteine 50, cysteine 37–cysteine 55, and cysteine 41–cysteine 57.

It belongs to the DEFL family.

It localises to the secreted. The sequence is that of Defensin-like protein 308 from Arabidopsis thaliana (Mouse-ear cress).